We begin with the raw amino-acid sequence, 491 residues long: Protein nucleotidyltransferase YdiU (491 aa).

Positions 88, 90, 91, 111, 123, 124, 174, and 181 each coordinate ATP. Aspartate 250 (proton acceptor) is an active-site residue. The Mg(2+) site is built by asparagine 251 and aspartate 260. Position 260 (aspartate 260) interacts with ATP.

Belongs to the SELO family. It depends on Mg(2+) as a cofactor. Requires Mn(2+) as cofactor.

The catalysed reaction is L-seryl-[protein] + ATP = 3-O-(5'-adenylyl)-L-seryl-[protein] + diphosphate. It catalyses the reaction L-threonyl-[protein] + ATP = 3-O-(5'-adenylyl)-L-threonyl-[protein] + diphosphate. It carries out the reaction L-tyrosyl-[protein] + ATP = O-(5'-adenylyl)-L-tyrosyl-[protein] + diphosphate. The enzyme catalyses L-histidyl-[protein] + UTP = N(tele)-(5'-uridylyl)-L-histidyl-[protein] + diphosphate. The catalysed reaction is L-seryl-[protein] + UTP = O-(5'-uridylyl)-L-seryl-[protein] + diphosphate. It catalyses the reaction L-tyrosyl-[protein] + UTP = O-(5'-uridylyl)-L-tyrosyl-[protein] + diphosphate. In terms of biological role, nucleotidyltransferase involved in the post-translational modification of proteins. It can catalyze the addition of adenosine monophosphate (AMP) or uridine monophosphate (UMP) to a protein, resulting in modifications known as AMPylation and UMPylation. This is Protein nucleotidyltransferase YdiU from Rhodopseudomonas palustris (strain BisB18).